Here is a 20-residue protein sequence, read N- to C-terminus: Brevinin-1DYc (20 aa).

An intrachain disulfide couples C14 to C20.

As to expression, expressed by the skin glands.

It is found in the secreted. In terms of biological role, antimicrobial peptide. Has low activity against the Gram-positive bacterium S.aureus and the Gram-negative bacterium E.coli (MIC&lt;15 uM). Has a strong hemolytic activity. This Rana dybowskii (Dybovsky's frog) protein is Brevinin-1DYc.